A 286-amino-acid chain; its full sequence is Protein NipSnap homolog 2 (286 aa).

The N-terminal 40 residues, 1–40 (MATRVLHSSCSGLYRAAGPARGKGHATAVIRSLSASHNRP), are a transit peptide targeting the mitochondrion.

The protein belongs to the NipSnap family.

It localises to the mitochondrion matrix. In terms of biological role, protein involved in mitophagy. Accumulates on the mitochondria surface in response to mitochondrial depolarization and acts as a 'eat me' signal by recruiting proteins involved in selective autophagy. The chain is Protein NipSnap homolog 2 (nipsnap2) from Danio rerio (Zebrafish).